Reading from the N-terminus, the 206-residue chain is Protein Nef (206 aa).

Glycine 2 is lipidated: N-myristoyl glycine; by host. Residue serine 6 is modified to Phosphoserine; by host. An acidic; interacts with host PACS1 and PACS2; stabilizes the interaction of NEF/MHC-I with host AP1M1; necessary for MHC-I internalization region spans residues 62-65; it reads QNEE. The SH3-binding; interaction with Src family tyrosine kinases stretch occupies residues 69–78; it reads PVRPQVPLRP. The short motif at 72–75 is the PxxP; stabilizes the interaction of NEF/MHC-I with host AP1M1; necessary for MHC-I internalization element; that stretch reads PQVP. Residues 108–124 are mediates dimerization, Nef-PTE1 interaction; the sequence is EILDLWVYHTQGFFPDW. The segment at 148-180 is binding to ATP6V1H; sequence LEPEEVERANEGDNNILLHPICQHGQEDEAREV. Residues 164 to 165 carry the Dileucine internalization motif; necessary for CD4 internalization motif; the sequence is LL. The Diacidic; necessary for CD4 internalization signature appears at 174-175; that stretch reads ED.

This sequence belongs to the lentivirus primate group Nef protein family. In terms of assembly, monomer; cytosolic form. Homodimer; membrane bound form. Interacts with Nef associated p21-activated kinase (PAK2); this interaction activates PAK2. Associates with the Nef-MHC-I-AP1 complex; this complex is required for MHC-I internalization. Interacts (via C-terminus) with host PI3-kinase. Interacts with host PACS1; this interaction seems to be weak. Interacts with host PACS2. Interacts with host LCK and MAPK3; these interactions inhibit the kinase activity of the latter. Interacts with host ATP6V1H; this interaction may play a role in CD4 endocytosis. Associates with the CD4-Nef-AP2 complex; this complex is required for CD4 internalization. Interacts with host AP2 subunit alpha and AP2 subunit sigma2. Interacts with TCR-zeta chain; this interaction up-regulates the Fas ligand (FasL) surface expression. Interacts with host HCK, LYN, and SRC; these interactions activate the Src family kinases. Interacts with MAP3K5; this interaction inhibits the Fas and TNFR-mediated death signals. Interacts with beta-COP and PTE1. Interacts with human RACK1; this increases Nef phosphorylation by PKC. Interacts with TP53; this interaction decreases the half-life of TP53, protecting the infected cell against p53-mediated apoptosis. In terms of processing, the virion-associated Nef proteins are cleaved by the viral protease to release the soluble C-terminal core protein. Nef is probably cleaved concomitantly with viral structural proteins on maturation of virus particles. Post-translationally, myristoylated. Phosphorylated on serine residues, probably by host PKCdelta and theta.

Its subcellular location is the host cell membrane. The protein resides in the virion. It is found in the secreted. It localises to the host Golgi apparatus membrane. Factor of infectivity and pathogenicity, required for optimal virus replication. Alters numerous pathways of T-lymphocyte function and down-regulates immunity surface molecules in order to evade host defense and increase viral infectivity. Alters the functionality of other immunity cells, like dendritic cells, monocytes/macrophages and NK cells. Functionally, in infected CD4(+) T-lymphocytes, down-regulates the surface MHC-I, mature MHC-II, CD4, CD28, CCR5 and CXCR4 molecules. Mediates internalization and degradation of host CD4 through the interaction of with the cytoplasmic tail of CD4, the recruitment of AP-2 (clathrin adapter protein complex 2), internalization through clathrin coated pits, and subsequent transport to endosomes and lysosomes for degradation. Diverts host MHC-I molecules to the trans-Golgi network-associated endosomal compartments by an endocytic pathway to finally target them for degradation. MHC-I down-regulation may involve AP-1 (clathrin adapter protein complex 1) or possibly Src family kinase-ZAP70/Syk-PI3K cascade recruited by PACS2. In consequence infected cells are masked for immune recognition by cytotoxic T-lymphocytes. Decreasing the number of immune receptors also prevents reinfection by more HIV particles (superinfection). Down-regulates host SERINC3 and SERINC5 thereby excluding these proteins from the viral particles. Virion infectivity is drastically higher when SERINC3 or SERINC5 are excluded from the viral envelope, because these host antiviral proteins impair the membrane fusion event necessary for subsequent virion penetration. In terms of biological role, bypasses host T-cell signaling by inducing a transcriptional program nearly identical to that of anti-CD3 cell activation. Interaction with TCR-zeta chain up-regulates the Fas ligand (FasL). Increasing surface FasL molecules and decreasing surface MHC-I molecules on infected CD4(+) cells send attacking cytotoxic CD8+ T-lymphocytes into apoptosis. Its function is as follows. Plays a role in optimizing the host cell environment for viral replication without causing cell death by apoptosis. Protects the infected cells from apoptosis in order to keep them alive until the next virus generation is ready to strike. Inhibits the Fas and TNFR-mediated death signals by blocking MAP3K5/ASK1. Decreases the half-life of TP53, protecting the infected cell against p53-mediated apoptosis. Inhibits the apoptotic signals regulated by the Bcl-2 family proteins through the formation of a Nef/PI3-kinase/PAK2 complex that leads to activation of PAK2 and induces phosphorylation of host BAD. Extracellular Nef protein targets CD4(+) T-lymphocytes for apoptosis by interacting with CXCR4 surface receptors. The chain is Protein Nef from Simian immunodeficiency virus (isolate MB66) (SIV-cpz).